A 997-amino-acid chain; its full sequence is Protein translocase subunit SecA (997 aa).

Residues Gln-84, 102 to 106, and Asp-582 contribute to the ATP site; that span reads GEGKT. Residues 950–997 form a disordered region; sequence PYVPVPEAKPEPSEVFGVERKRATPPPQPGLSRAERRRLMRQEKKRKK. Positions 957–971 are enriched in basic and acidic residues; that stretch reads AKPEPSEVFGVERKR. The span at 984–997 shows a compositional bias: basic residues; sequence ERRRLMRQEKKRKK.

This sequence belongs to the SecA family. As to quaternary structure, part of the essential Sec protein translocation apparatus which comprises SecA, SecYEG and auxiliary proteins SecDF. Other proteins may also be involved. Monomer and homodimer.

Its subcellular location is the cell inner membrane. It localises to the cytoplasm. The catalysed reaction is ATP + H2O + cellular proteinSide 1 = ADP + phosphate + cellular proteinSide 2.. Its function is as follows. Part of the Sec protein translocase complex. Interacts with the SecYEG preprotein conducting channel. Has a central role in coupling the hydrolysis of ATP to the transfer of proteins into and across the cell membrane, serving as an ATP-driven molecular motor driving the stepwise translocation of polypeptide chains across the membrane. This Thermus thermophilus (strain ATCC 27634 / DSM 579 / HB8) protein is Protein translocase subunit SecA.